We begin with the raw amino-acid sequence, 74 residues long: ATP synthase subunit 9, mitochondrial (74 aa).

The next 2 membrane-spanning stretches (helical) occupy residues 8 to 28 and 50 to 70; these read IGAG…GNVF and ILGF…AFLI.

This sequence belongs to the ATPase C chain family. F-type ATPases have 2 components, CF(1) - the catalytic core - and CF(0) - the membrane proton channel. CF(1) has five subunits: alpha(3), beta(3), gamma(1), delta(1), epsilon(1). CF(0) has three main subunits: a, b and c.

The protein localises to the mitochondrion membrane. Its function is as follows. This protein is one of the chains of the nonenzymatic membrane component (F0) of mitochondrial ATPase. This Triticum aestivum (Wheat) protein is ATP synthase subunit 9, mitochondrial (ATP9).